The chain runs to 92 residues: DNA/RNA-binding protein Alba (92 aa).

An N6-acetyllysine modification is found at lysine 11.

It belongs to the histone-like Alba family. Acetylated. Acetylation at Lys-11 decreases DNA-binding affinity.

Its subcellular location is the cytoplasm. It is found in the chromosome. Functionally, binds double-stranded DNA tightly but without sequence specificity. Involved in DNA compaction. The chain is DNA/RNA-binding protein Alba from Pyrobaculum aerophilum (strain ATCC 51768 / DSM 7523 / JCM 9630 / CIP 104966 / NBRC 100827 / IM2).